A 103-amino-acid polypeptide reads, in one-letter code: Acyl-CoA-binding protein (103 aa).

An ACB domain is found at 18 to 103 (HQADFDEAAE…AKTMVEKYGI (86 aa)). An acyl-CoA contacts are provided by residues lysine 30, 45-49 (YGFYK), lysine 67, lysine 71, and tyrosine 90.

It belongs to the ACBP family. In terms of assembly, monomer.

The protein resides in the endoplasmic reticulum. Its subcellular location is the golgi apparatus. Its function is as follows. Binds medium- and long-chain acyl-CoA esters with very high affinity and may function as an intracellular carrier of acyl-CoA esters. It is also able to displace diazepam from the benzodiazepine (BZD) recognition site located on the GABA type A receptor. It is therefore possible that this protein also acts as a neuropeptide to modulate the action of the GABA receptor. The chain is Acyl-CoA-binding protein (DBI) from Anas platyrhynchos (Mallard).